A 435-amino-acid chain; its full sequence is U-box domain-containing protein 21 (435 aa).

In terms of domain architecture, U-box spans 30 to 104 (TIPPEFQCPI…QGWCVEKGSP (75 aa)). ARM repeat units lie at residues 202 to 241 (LEGISKLASATSFRCVAGLLKSTDDSVRQNAAFIMKEILS), 245 to 285 (TRVH…QMVL), 288 to 327 (PEIASEFLEIGLVSITVEMIVDAENSVCEKALAVLDAICE), and 329 to 369 (EHGR…KLWK).

It catalyses the reaction S-ubiquitinyl-[E2 ubiquitin-conjugating enzyme]-L-cysteine + [acceptor protein]-L-lysine = [E2 ubiquitin-conjugating enzyme]-L-cysteine + N(6)-ubiquitinyl-[acceptor protein]-L-lysine.. It functions in the pathway protein modification; protein ubiquitination. Its function is as follows. Functions as an E3 ubiquitin ligase. In Arabidopsis thaliana (Mouse-ear cress), this protein is U-box domain-containing protein 21 (PUB21).